The following is a 166-amino-acid chain: MAIKLEDKKAIVAEVNEAAKAALSAVVADARGVTVGAMTGLRKEAREAGVYVRVVRNTLARRAVAGTQFEILNDAFKGPTLIAFSNEHPGAAARIFKEFAKGQDKFEIKAAAFEGQFLAANQIDVLATLPTYNEAVAQLMSVIQGATSKLARTLAAIRDQKEGAAA.

The protein belongs to the universal ribosomal protein uL10 family. As to quaternary structure, part of the ribosomal stalk of the 50S ribosomal subunit. The N-terminus interacts with L11 and the large rRNA to form the base of the stalk. The C-terminus forms an elongated spine to which L12 dimers bind in a sequential fashion forming a multimeric L10(L12)X complex.

Its function is as follows. Forms part of the ribosomal stalk, playing a central role in the interaction of the ribosome with GTP-bound translation factors. The sequence is that of Large ribosomal subunit protein uL10 from Azotobacter vinelandii (strain DJ / ATCC BAA-1303).